Consider the following 544-residue polypeptide: Chaperonin GroEL (544 aa).

Residues 29-32 (TLGP), 86-90 (DGTTT), Gly413, 476-478 (NAA), and Asp492 each bind ATP.

It belongs to the chaperonin (HSP60) family. In terms of assembly, forms a cylinder of 14 subunits composed of two heptameric rings stacked back-to-back. Interacts with the co-chaperonin GroES.

The protein resides in the cytoplasm. The catalysed reaction is ATP + H2O + a folded polypeptide = ADP + phosphate + an unfolded polypeptide.. Its function is as follows. Together with its co-chaperonin GroES, plays an essential role in assisting protein folding. The GroEL-GroES system forms a nano-cage that allows encapsulation of the non-native substrate proteins and provides a physical environment optimized to promote and accelerate protein folding. This Bacillus cereus protein is Chaperonin GroEL.